Consider the following 400-residue polypeptide: Argininosuccinate synthase (400 aa).

ATP-binding positions include 11-19 (AYSGGLDTS) and alanine 38. Tyrosine 89 and serine 94 together coordinate L-citrulline. Residue glycine 119 participates in ATP binding. Residues threonine 121, asparagine 125, and aspartate 126 each coordinate L-aspartate. Asparagine 125 contacts L-citrulline. The L-citrulline site is built by arginine 129, serine 178, serine 187, glutamate 263, and tyrosine 275.

It belongs to the argininosuccinate synthase family. Type 1 subfamily. As to quaternary structure, homotetramer.

It localises to the cytoplasm. The catalysed reaction is L-citrulline + L-aspartate + ATP = 2-(N(omega)-L-arginino)succinate + AMP + diphosphate + H(+). It functions in the pathway amino-acid biosynthesis; L-arginine biosynthesis; L-arginine from L-ornithine and carbamoyl phosphate: step 2/3. The chain is Argininosuccinate synthase from Desulfatibacillum aliphaticivorans.